Consider the following 336-residue polypeptide: Anthranilate phosphoribosyltransferase (336 aa).

Residues glycine 82, 85–86 (GD), threonine 90, 92–95 (NVST), 110–118 (KHGNRSVSS), and serine 122 each bind 5-phospho-alpha-D-ribose 1-diphosphate. Glycine 82 serves as a coordination point for anthranilate. Serine 94 lines the Mg(2+) pocket. Asparagine 113 serves as a coordination point for anthranilate. An anthranilate-binding site is contributed by arginine 168. Aspartate 227 and glutamate 228 together coordinate Mg(2+).

This sequence belongs to the anthranilate phosphoribosyltransferase family. In terms of assembly, homodimer. It depends on Mg(2+) as a cofactor.

The enzyme catalyses N-(5-phospho-beta-D-ribosyl)anthranilate + diphosphate = 5-phospho-alpha-D-ribose 1-diphosphate + anthranilate. It functions in the pathway amino-acid biosynthesis; L-tryptophan biosynthesis; L-tryptophan from chorismate: step 2/5. Functionally, catalyzes the transfer of the phosphoribosyl group of 5-phosphorylribose-1-pyrophosphate (PRPP) to anthranilate to yield N-(5'-phosphoribosyl)-anthranilate (PRA). This chain is Anthranilate phosphoribosyltransferase, found in Leptospira borgpetersenii serovar Hardjo-bovis (strain JB197).